The primary structure comprises 482 residues: ATP synthase subunit beta, chloroplastic (482 aa).

168-175 (GGAGVGKT) provides a ligand contact to ATP.

This sequence belongs to the ATPase alpha/beta chains family. In terms of assembly, F-type ATPases have 2 components, CF(1) - the catalytic core - and CF(0) - the membrane proton channel. CF(1) has five subunits: alpha(3), beta(3), gamma(1), delta(1), epsilon(1). CF(0) has four main subunits: a(1), b(1), b'(1) and c(9-12).

It is found in the plastid. The protein localises to the chloroplast thylakoid membrane. The catalysed reaction is ATP + H2O + 4 H(+)(in) = ADP + phosphate + 5 H(+)(out). Produces ATP from ADP in the presence of a proton gradient across the membrane. The catalytic sites are hosted primarily by the beta subunits. This is ATP synthase subunit beta, chloroplastic from Gnetum parvifolium (Small-leaved jointfir).